The following is a 998-amino-acid chain: Kinesin-like protein KIF19 (998 aa).

Residues 11 to 346 enclose the Kinesin motor domain; sequence QLMVALRVRP…LTYAGRAKNI (336 aa). An ATP-binding site is contributed by 104–111; it reads GPTGCGKT. 2 coiled-coil regions span residues 360–391 and 424–452; these read HIAQ…RGQA and EQLA…EVQI. Over residues 482–494 the composition is skewed to basic and acidic residues; sequence ECYAKDDSEKDSD. The segment at 482–503 is disordered; that stretch reads ECYAKDDSEKDSDTGDDQPDIL. A coiled-coil region spans residues 507–552; that stretch reads EVAAARESIAALVDEQKQLRKQKLALEQRCRELRARGRRLEETLPR. 4 stretches are compositionally biased toward polar residues: residues 662–676, 684–697, 746–761, and 836–852; these read SSLP…SLTP, KTLS…QNSA, SLGS…SENL, and TLQH…STGE. Disordered regions lie at residues 662–706, 746–765, 794–911, and 948–998; these read SSLP…TESE, SLGS…SEIP, GTEG…THLL, and KLPP…SRHN. A compositionally biased stretch (basic and acidic residues) spans 989–998; that stretch reads HGKDGCSRHN.

This sequence belongs to the TRAFAC class myosin-kinesin ATPase superfamily. Kinesin family.

The protein localises to the cytoplasm. The protein resides in the cytoskeleton. It localises to the cell projection. It is found in the cilium. In terms of biological role, plus end-directed microtubule-dependent motor protein that regulates the length of motile cilia by mediating depolymerization of microtubules at ciliary tips. The protein is Kinesin-like protein KIF19 (KIF19) of Homo sapiens (Human).